The primary structure comprises 361 residues: Peptide chain release factor 1 (361 aa).

Residue Q237 is modified to N5-methylglutamine. A disordered region spans residues 287-306 (KRAAEEASTRKSLVGSGDRS).

Belongs to the prokaryotic/mitochondrial release factor family. Post-translationally, methylated by PrmC. Methylation increases the termination efficiency of RF1.

It is found in the cytoplasm. Functionally, peptide chain release factor 1 directs the termination of translation in response to the peptide chain termination codons UAG and UAA. This chain is Peptide chain release factor 1, found in Alteromonas mediterranea (strain DSM 17117 / CIP 110805 / LMG 28347 / Deep ecotype).